The sequence spans 185 residues: MANAIVEKAKERMTHSHQSLAREFGSIRAGRANASLLDRIHVEYYGVETPLNQIASITIPEARVLLVTPFDKSSIKDIERALNASDLGITPASDGSVIRLVIPALTEETRRDLAKEVKKVGENAKVAIRNIRRDAMDEAKKQEKAKEITEDELKTLEKDIQKVTDDAVKHIDEMTANKEKELLEV.

This sequence belongs to the RRF family.

The protein resides in the cytoplasm. Responsible for the release of ribosomes from messenger RNA at the termination of protein biosynthesis. May increase the efficiency of translation by recycling ribosomes from one round of translation to another. This Streptococcus sanguinis (strain SK36) protein is Ribosome-recycling factor.